A 688-amino-acid chain; its full sequence is Translation initiation factor IF-2 (688 aa).

The segment at Glu-62–Val-103 is disordered. Residues Arg-71 to Gly-83 show a composition bias toward basic residues. The region spanning Glu-190–Lys-359 is the tr-type G domain. The G1 stretch occupies residues Gly-199–Thr-206. Gly-199–Thr-206 lines the GTP pocket. Residues Gly-224 to His-228 are G2. The G3 stretch occupies residues Asp-245–Gly-248. Residues Asp-245–His-249 and Asn-299–Asp-302 each bind GTP. The G4 stretch occupies residues Asn-299–Asp-302. Positions Ser-335–Ile-337 are G5.

It belongs to the TRAFAC class translation factor GTPase superfamily. Classic translation factor GTPase family. IF-2 subfamily.

Its subcellular location is the cytoplasm. Functionally, one of the essential components for the initiation of protein synthesis. Protects formylmethionyl-tRNA from spontaneous hydrolysis and promotes its binding to the 30S ribosomal subunits. Also involved in the hydrolysis of GTP during the formation of the 70S ribosomal complex. This is Translation initiation factor IF-2 from Bacillus cereus (strain G9842).